A 622-amino-acid chain; its full sequence is uncharacterized protein (622 aa).

[4Fe-4S] cluster-binding residues include C302, C306, C310, and C521.

Belongs to the AOR/FOR family. The cofactor is [4Fe-4S] cluster.

This is an uncharacterized protein from Methanocaldococcus jannaschii (strain ATCC 43067 / DSM 2661 / JAL-1 / JCM 10045 / NBRC 100440) (Methanococcus jannaschii).